The following is a 111-amino-acid chain: 4'-hydroxy-3'-methoxypropiophenone carrier protein ppsC (111 aa).

The disordered stretch occupies residues 1–21 (MSAQVMRPGTPQHEGQEFLSG).

Its pathway is secondary metabolite biosynthesis. Its function is as follows. 4'-hydroxy-3'-methoxypropiophenone carrier protein; part of the gene cluster that mediates the biosynthesis of 2,4'-dihydroxy-3'-methoxypropiophenone. The first step of the pathway is the conversion of acetate into acetyl-CoA by the acyl-CoA ligase ppsA. Acetyl-CoA is then used as a starter unit by the polyketide synthase ppsB and condensed with 4 malonyl-CoA unit to produce the pentaketide backbone. During polyketide extension, the polykedite chain is probably reduced and dehydrated by the KR and PT domains, respectively. O-methylation seems to be catalyzed by an unknown methyltransferase rather than by the CMeT domain of ppsB. Two hydroxylations and one further decarboxylation step catalyzed by yet unknown enzymes are then required to yield 4'-hydroxy-3'-methoxypropiophenone. PpsC functions as a carrier protein to transport 4'-hydroxy-3'-methoxypropiophenone to a specific cell compartment in which 4'-hydroxy-3'-methoxypropiophenone is hydroxylated to 2,4'-dihydroxy-3'-methoxypropiophenone by a still to be identified enzyme. This is 4'-hydroxy-3'-methoxypropiophenone carrier protein ppsC from Aspergillus oryzae (strain ATCC 42149 / RIB 40) (Yellow koji mold).